We begin with the raw amino-acid sequence, 417 residues long: Phosphoglycerate kinase 2 (417 aa).

N-acetylserine is present on Ser2. Residues Ser2 and Ser4 each carry the phosphoserine modification. Lys11 carries the post-translational modification N6-acetyllysine. The (2R)-3-phosphoglycerate site is built by Val23, Asp24, Phe25, Asn26, Gln38, and Arg39. The residue at position 48 (Lys48) is an N6-acetyllysine. Positions 62, 63, 65, and 66 each coordinate (2R)-3-phosphoglycerate. Lys75, Lys86, and Lys97 each carry N6-acetyllysine. (2R)-3-phosphoglycerate contacts are provided by Leu122 and Arg123. N6-acetyllysine occurs at positions 131 and 146. The (2R)-3-phosphoglycerate site is built by His170 and Arg171. Tyr196 is modified (phosphotyrosine). An N6-acetyllysine modification is found at Lys199. An ADP-binding site is contributed by Gly214. Gly214 is a CDP binding site. The AMP site is built by Ala215 and Lys216. Ala215 is a binding site for ATP. Mg(2+) is bound at residue Ala215. Mg(2+)-binding residues include Ala218 and Asp219. Position 219 (Asp219) interacts with CDP. Residue Lys220 participates in AMP binding. Position 220 (Lys220) interacts with ATP. Gly238 contacts ADP. Gly238 is a binding site for CDP. Gly239 contacts AMP. Residue Gly239 coordinates ATP. N6-acetyllysine occurs at positions 267 and 291. AMP is bound at residue Gly313. Gly313 is an ATP binding site. CDP-binding residues include Gly338 and Phe343. Position 343 (Phe343) interacts with ADP. Glu344 serves as a coordination point for AMP. ATP is bound by residues Glu344, Asp375, and Thr376. Asp375 contacts Mg(2+).

It belongs to the phosphoglycerate kinase family. Monomer. The cofactor is Mg(2+). In terms of tissue distribution, mainly found in round spermatids. Localized on the principle piece in the sperm (at protein level). Testis-specific. Expression significantly decreased in the testis of elderly men.

Its subcellular location is the cytoplasm. The enzyme catalyses (2R)-3-phosphoglycerate + ATP = (2R)-3-phospho-glyceroyl phosphate + ADP. Its pathway is carbohydrate degradation; glycolysis; pyruvate from D-glyceraldehyde 3-phosphate: step 2/5. Essential for sperm motility and male fertility. Not required for the completion of spermatogenesis. This Homo sapiens (Human) protein is Phosphoglycerate kinase 2 (PGK2).